Here is a 281-residue protein sequence, read N- to C-terminus: NAC domain-containing protein 6 (281 aa).

The region spanning 4–156 is the NAC domain; that stretch reads LPVGSRFCPT…QDALTGFADQ (153 aa). Disordered stretches follow at residues 84-109 and 211-249; these read GGSE…QKGD and LEGH…VTQE. A compositionally biased stretch (basic and acidic residues) spans 94–109; that stretch reads NDGKKEIKDGHMQKGD. The DNA-binding element occupies 109–162; that stretch reads DGLRASDDLQKVVLCRIRYKKEANVNEFGLVNHQAHQTQDALTGFADQLEMMLE. The span at 229–239 shows a compositional bias: low complexity; it reads QQQQQQQQQQQ.

The protein localises to the nucleus. The chain is NAC domain-containing protein 6 (NAC006) from Arabidopsis thaliana (Mouse-ear cress).